A 173-amino-acid chain; its full sequence is Shikimate kinase (173 aa).

14–19 serves as a coordination point for ATP; it reads GAGKST. A Mg(2+)-binding site is contributed by serine 18. Substrate-binding residues include aspartate 36, arginine 60, and glycine 82. Lysine 120 is an ATP binding site. Arginine 140 is a substrate binding site.

The protein belongs to the shikimate kinase family. As to quaternary structure, monomer. It depends on Mg(2+) as a cofactor.

The protein localises to the cytoplasm. The enzyme catalyses shikimate + ATP = 3-phosphoshikimate + ADP + H(+). Its pathway is metabolic intermediate biosynthesis; chorismate biosynthesis; chorismate from D-erythrose 4-phosphate and phosphoenolpyruvate: step 5/7. Functionally, catalyzes the specific phosphorylation of the 3-hydroxyl group of shikimic acid using ATP as a cosubstrate. This Wigglesworthia glossinidia brevipalpis protein is Shikimate kinase (aroK).